Reading from the N-terminus, the 648-residue chain is Wilms tumor protein 1-interacting protein homolog (648 aa).

3 disordered regions span residues 27–56 (DGMY…KVYS), 142–291 (SNSL…SPRS), and 306–327 (SPRS…GSMS). Composition is skewed to low complexity over residues 158 to 171 (SPRS…SSQD) and 178 to 192 (PRSS…LVSP). 2 stretches are compositionally biased toward polar residues: residues 197 to 213 (GTSV…TASD) and 220 to 241 (PRTS…TSGI). The span at 252–267 (PRSSTTSPRSSYSDSR) shows a compositional bias: low complexity. LIM zinc-binding domains are found at residues 437–498 (GICV…SGFQ), 502–561 (EKCF…TVFA), and 562–631 (PKCA…RLKT).

The protein belongs to the zyxin/ajuba family.

The protein localises to the cell junction. It is found in the adherens junction. The protein resides in the nucleus. In terms of biological role, may monitor slit diaphragm protein assembly, a specialized adherens junction characteristic of podocytes. In case of podocyte injury, it shuttles into the nucleus and acts as a transcription regulator. Plays a role in the regulation of cell morphology and cytoskeletal organization. Acts as a transcriptional corepressor for snai1 and snai2/slug and plays a role in regulating neural crest development. This is Wilms tumor protein 1-interacting protein homolog (wtip) from Danio rerio (Zebrafish).